Here is a 358-residue protein sequence, read N- to C-terminus: Phosphoserine aminotransferase (358 aa).

Residue Arg-41 participates in L-glutamate binding. Pyridoxal 5'-phosphate contacts are provided by residues 75–76, Trp-100, Thr-148, Asp-167, and Gln-190; that span reads AS. An N6-(pyridoxal phosphate)lysine modification is found at Lys-191. Residue 233-234 participates in pyridoxal 5'-phosphate binding; that stretch reads NT.

Belongs to the class-V pyridoxal-phosphate-dependent aminotransferase family. SerC subfamily. Homodimer. Pyridoxal 5'-phosphate serves as cofactor.

It is found in the cytoplasm. The catalysed reaction is O-phospho-L-serine + 2-oxoglutarate = 3-phosphooxypyruvate + L-glutamate. The enzyme catalyses 4-(phosphooxy)-L-threonine + 2-oxoglutarate = (R)-3-hydroxy-2-oxo-4-phosphooxybutanoate + L-glutamate. The protein operates within amino-acid biosynthesis; L-serine biosynthesis; L-serine from 3-phospho-D-glycerate: step 2/3. It functions in the pathway cofactor biosynthesis; pyridoxine 5'-phosphate biosynthesis; pyridoxine 5'-phosphate from D-erythrose 4-phosphate: step 3/5. Functionally, catalyzes the reversible conversion of 3-phosphohydroxypyruvate to phosphoserine and of 3-hydroxy-2-oxo-4-phosphonooxybutanoate to phosphohydroxythreonine. The chain is Phosphoserine aminotransferase from Campylobacter jejuni subsp. jejuni serotype O:23/36 (strain 81-176).